The primary structure comprises 302 residues: Ribosomal RNA small subunit methyltransferase H (302 aa).

S-adenosyl-L-methionine is bound by residues 32-34, Asp51, Phe78, Asp97, and Gln104; that span reads GGH.

Belongs to the methyltransferase superfamily. RsmH family.

It localises to the cytoplasm. It carries out the reaction cytidine(1402) in 16S rRNA + S-adenosyl-L-methionine = N(4)-methylcytidine(1402) in 16S rRNA + S-adenosyl-L-homocysteine + H(+). Functionally, specifically methylates the N4 position of cytidine in position 1402 (C1402) of 16S rRNA. This Nitratiruptor sp. (strain SB155-2) protein is Ribosomal RNA small subunit methyltransferase H.